The following is a 389-amino-acid chain: Sedoheptulose-1,7-bisphosphatase, chloroplastic (389 aa).

An intrachain disulfide couples cysteine 115 to cysteine 120. Mg(2+) is bound by residues aspartate 126, glutamate 155, aspartate 173, leucine 175, and aspartate 176. Substrate is bound by residues 176 to 179, tyrosine 287, and lysine 317; that span reads DGSS. Glutamate 323 provides a ligand contact to Mg(2+).

Belongs to the FBPase class 1 family. Homodimer. Requires Mg(2+) as cofactor.

It is found in the plastid. It localises to the chloroplast. The enzyme catalyses D-sedoheptulose 1,7-bisphosphate + H2O = D-sedoheptulose 7-phosphate + phosphate. It functions in the pathway carbohydrate biosynthesis; Calvin cycle. The chain is Sedoheptulose-1,7-bisphosphatase, chloroplastic (CSBP) from Chlamydomonas reinhardtii (Chlamydomonas smithii).